The sequence spans 340 residues: Mitochondrial import receptor subunit TOM40 homolog 2 (340 aa).

The disordered stretch occupies residues 1–37; it reads MGNVMASTADAESSRGRGHLSAGLRLPEAPQYSGGVP.

Belongs to the Tom40 family. As to quaternary structure, forms part of the preprotein translocase of the outer mitochondrial membrane (TOM complex). Interacts with mitochondrial targeting sequences. Only expressed in the male germline, detected in primary spermatocytes as well as post-meiotic stages. Not detected in stem cells and spermatogonia near the tip of the testis.

It localises to the mitochondrion outer membrane. Channel-forming protein essential for import of protein precursors into mitochondria. This is Mitochondrial import receptor subunit TOM40 homolog 2 from Drosophila melanogaster (Fruit fly).